We begin with the raw amino-acid sequence, 172 residues long: UPF0254 protein Mlab_1743 (172 aa).

The protein belongs to the UPF0254 family.

This chain is UPF0254 protein Mlab_1743, found in Methanocorpusculum labreanum (strain ATCC 43576 / DSM 4855 / Z).